A 395-amino-acid polypeptide reads, in one-letter code: Thyrotropin-releasing hormone receptor (395 aa).

The Extracellular portion of the chain corresponds to 1–30 (MENGTGDEQNHTGLLLSSQEFVTAEYQVVT). Asn3 and Asn10 each carry an N-linked (GlcNAc...) asparagine glycan. Residues 31–53 (ILLVLLICGLGIVGNIMVVLVVL) form a helical membrane-spanning segment. Topologically, residues 54-63 (RTKHMRTPTN) are cytoplasmic. The helical transmembrane segment at 64-85 (CYLVSLAVADLMVLVAAGLPNI) threads the bilayer. At 86-101 (TESLYKSWVYGYVGCL) the chain is on the extracellular side. Cys100 and Cys181 are oxidised to a cystine. A helical transmembrane segment spans residues 102 to 123 (CITYLQYLGINASSFSITAFTI). The Cytoplasmic segment spans residues 124–146 (ERYIAICHPIKAQFLCTFSRAKK). Residues 147 to 170 (IIIFVWSFASVYCMLWFFLLDLNI) traverse the membrane as a helical segment. Topologically, residues 171–195 (AVYKDTTVVSCGYKVSRSYYSPIYM) are extracellular. Residues 196–217 (MDFGIFYVLPMVLATVLYGLIA) traverse the membrane as a helical segment. Residues 218–268 (RILFLNPIPSDPKENSNTWKNDMAQQNKTVNSKMTNKSFNSTIASRRQVTK) are Cytoplasmic-facing. Residues 269–290 (MLAVVVVLFAFLWMPYRTLVVV) form a helical membrane-spanning segment. Over 291–298 (NSFLSSPF) the chain is Extracellular. Residues 299–321 (QENWFLLFCRICIYLNSAINPVI) form a helical membrane-spanning segment. Residues 322–395 (YNLMSQKFRA…IGDTCLSSEA (74 aa)) are Cytoplasmic-facing.

The protein belongs to the G-protein coupled receptor 1 family.

It is found in the cell membrane. Functionally, receptor for thyrotropin-releasing hormone (TRH). Upon ligand binding, this G-protein-coupled receptor triggers activation of the phosphatidylinositol (IP3)-calcium-protein kinase C (PKC) pathway. This is Thyrotropin-releasing hormone receptor (TRHR) from Gallus gallus (Chicken).